Consider the following 499-residue polypeptide: Probable cytosol aminopeptidase (499 aa).

Lysine 263 and aspartate 268 together coordinate Mn(2+). The active site involves lysine 275. Positions 286, 345, and 347 each coordinate Mn(2+). The active site involves arginine 349.

Belongs to the peptidase M17 family. The cofactor is Mn(2+).

The protein localises to the cytoplasm. It carries out the reaction Release of an N-terminal amino acid, Xaa-|-Yaa-, in which Xaa is preferably Leu, but may be other amino acids including Pro although not Arg or Lys, and Yaa may be Pro. Amino acid amides and methyl esters are also readily hydrolyzed, but rates on arylamides are exceedingly low.. It catalyses the reaction Release of an N-terminal amino acid, preferentially leucine, but not glutamic or aspartic acids.. In terms of biological role, presumably involved in the processing and regular turnover of intracellular proteins. Catalyzes the removal of unsubstituted N-terminal amino acids from various peptides. The sequence is that of Probable cytosol aminopeptidase from Chlamydia caviae (strain ATCC VR-813 / DSM 19441 / 03DC25 / GPIC) (Chlamydophila caviae).